We begin with the raw amino-acid sequence, 396 residues long: 1-deoxy-D-xylulose 5-phosphate reductoisomerase (396 aa).

5 residues coordinate NADPH: Thr-10, Gly-11, Ser-12, Ile-13, and Asn-123. Position 124 (Lys-124) interacts with 1-deoxy-D-xylulose 5-phosphate. Glu-125 serves as a coordination point for NADPH. Asp-149 is a Mn(2+) binding site. The 1-deoxy-D-xylulose 5-phosphate site is built by Ser-150, Glu-151, Ser-185, and His-208. Glu-151 contacts Mn(2+). NADPH is bound at residue Gly-214. 1-deoxy-D-xylulose 5-phosphate is bound by residues Ser-221, Asn-226, Lys-227, and Glu-230. Glu-230 contacts Mn(2+).

This sequence belongs to the DXR family. Mg(2+) is required as a cofactor. The cofactor is Mn(2+).

It catalyses the reaction 2-C-methyl-D-erythritol 4-phosphate + NADP(+) = 1-deoxy-D-xylulose 5-phosphate + NADPH + H(+). The protein operates within isoprenoid biosynthesis; isopentenyl diphosphate biosynthesis via DXP pathway; isopentenyl diphosphate from 1-deoxy-D-xylulose 5-phosphate: step 1/6. Its function is as follows. Catalyzes the NADPH-dependent rearrangement and reduction of 1-deoxy-D-xylulose-5-phosphate (DXP) to 2-C-methyl-D-erythritol 4-phosphate (MEP). In Shewanella baltica (strain OS155 / ATCC BAA-1091), this protein is 1-deoxy-D-xylulose 5-phosphate reductoisomerase.